Here is a 1262-residue protein sequence, read N- to C-terminus: Putative late blight resistance protein homolog R1B-23 (1262 aa).

2 coiled-coil regions span residues 364-384 (DSLA…ESMQ) and 475-496 (RMNE…KLLN). The region spanning 475–761 (RMNEEIVGFE…ISESFIKSCE (287 aa)) is the NB-ARC domain. An ATP-binding site is contributed by 508–515 (GMPGLGKT). LRR repeat units follow at residues 890–914 (FKFL…LFYL), 933–961 (LWNL…VWDM), 1036–1059 (PIRL…CISA), 1064–1083 (YLEL…TADH), 1084–1112 (LKHL…MFPQ), and 1133–1157 (FPNL…FMDI). The 68-residue stretch at 1181–1248 (ETQVEDNQNT…KLRNVAYADE (68 aa)) folds into the HMA domain.

It belongs to the disease resistance NB-LRR family.

It localises to the cytoplasm. It is found in the membrane. Its function is as follows. Confers resistance to late blight (Phytophthora infestans) races carrying the avirulence gene Avr1. Resistance proteins guard the plant against pathogens that contain an appropriate avirulence protein via an indirect interaction with this avirulence protein. That triggers a defense system including the hypersensitive response, which restricts the pathogen growth. This Solanum demissum (Wild potato) protein is Putative late blight resistance protein homolog R1B-23 (R1B-23).